A 164-amino-acid chain; its full sequence is Dihydrofolate reductase (164 aa).

The 161-residue stretch at 2 to 162 (NISIIVAMSQ…FYVTFKILKK (161 aa)) folds into the DHFR domain. Substrate is bound at residue 6 to 8 (IVA). NADP(+)-binding positions include 7 to 8 (VA) and 15 to 20 (IGQKNS). Residue aspartate 28 participates in substrate binding. Residue 44–47 (GRKT) participates in NADP(+) binding. Arginine 58 is a binding site for substrate. NADP(+) contacts are provided by residues 63 to 66 (LTRQ) and 96 to 101 (IGGSNL). Threonine 115 serves as a coordination point for substrate.

Belongs to the dihydrofolate reductase family.

It carries out the reaction (6S)-5,6,7,8-tetrahydrofolate + NADP(+) = 7,8-dihydrofolate + NADPH + H(+). It functions in the pathway cofactor biosynthesis; tetrahydrofolate biosynthesis; 5,6,7,8-tetrahydrofolate from 7,8-dihydrofolate: step 1/1. Its function is as follows. Key enzyme in folate metabolism. Catalyzes an essential reaction for de novo glycine and purine synthesis, and for DNA precursor synthesis. This Buchnera aphidicola subsp. Baizongia pistaciae (strain Bp) protein is Dihydrofolate reductase (folA).